We begin with the raw amino-acid sequence, 276 residues long: Protein-glutamine gamma-glutamyltransferase (276 aa).

This sequence belongs to the bacillus TGase family.

It catalyses the reaction L-glutaminyl-[protein] + L-lysyl-[protein] = [protein]-L-lysyl-N(6)-5-L-glutamyl-[protein] + NH4(+). In terms of biological role, probably plays a role in the assembly of the spore coat proteins by catalyzing epsilon-(gamma-glutamyl)lysine cross-links. This Bacillus anthracis (strain A0248) protein is Protein-glutamine gamma-glutamyltransferase.